The chain runs to 509 residues: Maturase K (509 aa).

This sequence belongs to the intron maturase 2 family. MatK subfamily.

It is found in the plastid. The protein resides in the chloroplast. Its function is as follows. Usually encoded in the trnK tRNA gene intron. Probably assists in splicing its own and other chloroplast group II introns. This is Maturase K from Nicotiana acuminata (Acuminate tobacco).